The chain runs to 78 residues: Large ribosomal subunit protein bL28 (78 aa).

It belongs to the bacterial ribosomal protein bL28 family.

The polypeptide is Large ribosomal subunit protein bL28 (Microcystis aeruginosa (strain NIES-843 / IAM M-2473)).